The chain runs to 481 residues: uncharacterized protein (481 aa).

10 helical membrane passes run 30 to 50, 96 to 116, 154 to 174, 196 to 216, 220 to 240, 250 to 270, 311 to 331, 354 to 374, 391 to 411, and 424 to 444; these read TIII…FVQF, AIAL…FIGM, CMAV…FNSV, ISLV…IAII, LVPM…GMHI, IVQS…ALVS, MLGV…IILL, IGEF…YSSI, KPWL…FGAV, and VMAV…PIVW.

This sequence belongs to the alanine or glycine:cation symporter (AGCS) (TC 2.A.25) family.

The protein localises to the cell inner membrane. This is an uncharacterized protein from Haemophilus influenzae (strain ATCC 51907 / DSM 11121 / KW20 / Rd).